We begin with the raw amino-acid sequence, 155 residues long: uncharacterized protein (155 aa).

The signal sequence occupies residues 1–21 (MFFIVAAGFVIAALIAAIGMA). The tract at residues 35-155 (GQTKPATTRP…PVYRPPEEMV (121 aa)) is disordered. The segment covering 118-128 (ATASNTPQNEA) has biased composition (polar residues).

This is an uncharacterized protein from Schizosaccharomyces pombe (strain 972 / ATCC 24843) (Fission yeast).